The following is a 286-amino-acid chain: Pre-mRNA-processing protein 45 (286 aa).

Disordered stretches follow at residues 111–146 (TNDINYIKYENPNPNPNPNPNPNQEQQQQSSSSSSK) and 253–286 (KQRNEIRQQKQLQEKRLRDEKIKEIANRSKRRRY). Residues 132 to 145 (PNQEQQQQSSSSSS) are compositionally biased toward low complexity. Over residues 253 to 279 (KQRNEIRQQKQLQEKRLRDEKIKEIAN) the composition is skewed to basic and acidic residues.

It belongs to the SNW family. As to quaternary structure, associated with the spliceosome.

It localises to the nucleus. In terms of biological role, involved in pre-mRNA splicing. The sequence is that of Pre-mRNA-processing protein 45 (PRP45) from Candida albicans (strain SC5314 / ATCC MYA-2876) (Yeast).